Reading from the N-terminus, the 310-residue chain is Acetylglutamate kinase (310 aa).

Substrate-binding positions include 76 to 77 (GG), arginine 98, and asparagine 203.

It belongs to the acetylglutamate kinase family. ArgB subfamily.

It localises to the cytoplasm. It catalyses the reaction N-acetyl-L-glutamate + ATP = N-acetyl-L-glutamyl 5-phosphate + ADP. It participates in amino-acid biosynthesis; L-arginine biosynthesis; N(2)-acetyl-L-ornithine from L-glutamate: step 2/4. Catalyzes the ATP-dependent phosphorylation of N-acetyl-L-glutamate. The protein is Acetylglutamate kinase of Cutibacterium acnes (strain DSM 16379 / KPA171202) (Propionibacterium acnes).